Reading from the N-terminus, the 658-residue chain is Probable CoA ligase CCL6 (658 aa).

ATP-binding positions include 226–234, 411–416, Asp497, 509–512, and Lys632; these read TSGATGEPK, QGYGLT, and IIDR. Positions 298–411 are SBD1; that stretch reads DIRFLMDDLQ…RVTSCAALSQ (114 aa). The interval 412-477 is SBD2; sequence GYGLTESCGG…LRGTTLFSGY (66 aa).

This sequence belongs to the ATP-dependent AMP-binding enzyme family. In terms of tissue distribution, mostly expressed in glandular trichomes (lupulin glands) after flowering, and, to a lower extent, in stems, leaves, cones and flowers.

The protein resides in the cytoplasm. It localises to the cytosol. The protein is Probable CoA ligase CCL6 of Humulus lupulus (European hop).